A 122-amino-acid chain; its full sequence is Acidic phospholipase A2 A' (122 aa).

7 disulfides stabilise this stretch: C26-C115, C28-C44, C43-C95, C49-C122, C50-C88, C57-C81, and C75-C86. The Ca(2+) site is built by Y27, G29, and G31. Residue H47 is part of the active site. D48 contributes to the Ca(2+) binding site. D89 is an active-site residue.

The protein belongs to the phospholipase A2 family. Group II subfamily. D49 sub-subfamily. The cofactor is Ca(2+). As to expression, expressed by the venom gland.

It localises to the secreted. The catalysed reaction is a 1,2-diacyl-sn-glycero-3-phosphocholine + H2O = a 1-acyl-sn-glycero-3-phosphocholine + a fatty acid + H(+). PLA2 catalyzes the calcium-dependent hydrolysis of the 2-acyl groups in 3-sn-phosphoglycerides. In Gloydius halys (Chinese water mocassin), this protein is Acidic phospholipase A2 A'.